Here is a 413-residue protein sequence, read N- to C-terminus: MIEELGLKVKTASKEAAKLSTAEKNTFLQKLADSLVENTDRIISENAKDLAKAKGHGISEIMVDRLRLTAQRISDMATGLRQVAELPDPIGQVLQGFTNLDGLKIVQKRVPLGTVGMIFESRPNVTIDAFSLCFKTGNSVLLRGGSDAIYSNMVLVEIIKENLLSAKITDGVVELLSDTSHAEAEKMMQADKFLDVLIPRGSARLINRVKEKATVPVIETGVGNCTIFVDESADLDMATRIVINAKTQRPSVCNAAESLVVHAKIADEFLPKLQNEINKVHEVEFRADERSLKALSAGIPATDEDFGMEFLDYILSVKTVDNLDEAIEHINTYSSRHSESIVTHDYFNAQKFQDEIDAAAVYVNASTRFTDGFVFGLGAEIGISTQKLHARGPMGLEALTSTKYLIDGCGQIR.

Belongs to the gamma-glutamyl phosphate reductase family.

Its subcellular location is the cytoplasm. The enzyme catalyses L-glutamate 5-semialdehyde + phosphate + NADP(+) = L-glutamyl 5-phosphate + NADPH + H(+). It functions in the pathway amino-acid biosynthesis; L-proline biosynthesis; L-glutamate 5-semialdehyde from L-glutamate: step 2/2. Its function is as follows. Catalyzes the NADPH-dependent reduction of L-glutamate 5-phosphate into L-glutamate 5-semialdehyde and phosphate. The product spontaneously undergoes cyclization to form 1-pyrroline-5-carboxylate. The sequence is that of Gamma-glutamyl phosphate reductase from Lactococcus lactis subsp. cremoris (strain MG1363).